A 108-amino-acid polypeptide reads, in one-letter code: UPF0060 membrane protein RHOS4_03690 (108 aa).

A run of 4 helical transmembrane segments spans residues 5 to 25 (LAAY…VWAW), 32 to 52 (ALWL…LALT), 62 to 82 (AVYG…VEGV), and 86 to 106 (RWDM…LWAP).

Belongs to the UPF0060 family.

It is found in the cell inner membrane. This Cereibacter sphaeroides (strain ATCC 17023 / DSM 158 / JCM 6121 / CCUG 31486 / LMG 2827 / NBRC 12203 / NCIMB 8253 / ATH 2.4.1.) (Rhodobacter sphaeroides) protein is UPF0060 membrane protein RHOS4_03690.